A 1835-amino-acid polypeptide reads, in one-letter code: Protein TIC 214 (1835 aa).

Helical transmembrane passes span 25–45 (VGLY…LFLL), 64–84 (FITG…HLAL), 87–107 (PHTI…WNNH), 124–144 (LSIQ…HFIL), 172–192 (VGWL…LFWI), and 221–241 (IFSI…PSPI). Positions 246–258 (LKETSETEERGES) are enriched in basic and acidic residues. Disordered stretches follow at residues 246-304 (LKET…DGNQ), 735-759 (EFKT…KKEE), and 1535-1578 (NRNQ…KRQS). Acidic residues predominate over residues 259 to 268 (AEETDVEIET). Residues 1553 to 1569 (PRNRQKDLEKDYAESDI) are compositionally biased toward basic and acidic residues.

It belongs to the TIC214 family. In terms of assembly, part of the Tic complex.

It is found in the plastid. It localises to the chloroplast inner membrane. Its function is as follows. Involved in protein precursor import into chloroplasts. May be part of an intermediate translocation complex acting as a protein-conducting channel at the inner envelope. The sequence is that of Protein TIC 214 from Liriodendron tulipifera (Tuliptree).